An 898-amino-acid polypeptide reads, in one-letter code: Chloride channel protein 2 (898 aa).

Over 1–90 (MAAPAAAAVE…RCHKFLVSRV (90 aa)) the chain is Cytoplasmic. The segment at 19 to 37 (QYEQTLMYGRYTQDLGAFA) is essential for channel gating by both voltage and cell volume. Phosphothreonine is present on T23. Residues 39-52 (EEAARIRLGGPEPW) form a modulates channel gating by both voltage and cell volume region. Helical transmembrane passes span 91 to 124 (GEDWIFLVLLGLLMALVSWAMDYAIAACLQAQQW) and 133 to 158 (LLLQYLAWVTYPVVLITFSAGFTQIL). The Selectivity filter part_1 motif lies at 164–168 (GSGIP). Positions 167–174 (IPEMKTIL) form an intramembrane region, helical. A run of 2 helical transmembrane segments spans residues 183–201 (LTLKTFVAKVIGLTCALGS) and 208–226 (EGPFVHIASMCAALLSKFL). The short motif at 206–210 (GKEGP) is the Selectivity filter part_2 element. 2 intramembrane regions (helical) span residues 242–254 (MLAAACAVGVGCC) and 258–266 (PIGGVLFSI). The next 5 helical transmembrane spans lie at 278–298 (YWRGFFAATFSAFIFRVLAVW), 324–352 (LPAFAVIGIASGFGGALFVYLNRKIVQVM), 361–380 (FLMRKRLLFPALVTLLISTL), 432–452 (ANVFLTLVIFILMKFWMSALA), and 460–483 (GAFMPVFVIGAAFGRLVGESMAAW). Positions 460 to 464 (GAFMP) match the Selectivity filter part_3 motif. Positions 500 to 514 (GGYAVVGAAALAGAV) form an intramembrane region, helical. The note=Loop between two helices intramembrane region spans 515 to 516 (TH). An intramembrane region (helical) is located at residues 517-528 (TVSTAVIVFELT). Residues 529–533 (GQIAH) constitute an intramembrane region (note=Loop between two helices). Residues 534-551 (ILPVMIAVILANAVAQSL) form a helical membrane-spanning segment. Residues 552 to 898 (QPSLYDSIIR…SPSDSDDKCQ (347 aa)) lie on the Cytoplasmic side of the membrane. The region spanning 587-645 (MVRDVPHVALSCTFRDLRLALHRTKGRTLALVESPESMILLGSIERTQVVALLAAQLSP) is the CBS 1 domain. The span at 647–658 (RRRQSKQKRRVA) shows a compositional bias: basic residues. The tract at residues 647–675 (RRRQSKQKRRVAHTSPPSCQESPPSPETS) is disordered. A Phosphoserine modification is found at S710. The interval 726-766 (FCGSPPPEAASESEKSESSEKRKSKRVRISLASDSDLEGEM) is disordered. The span at 737 to 746 (ESEKSESSEK) shows a compositional bias: basic and acidic residues. At S758 the chain carries Phosphoserine. A CBS 2 domain is found at 790 to 850 (IDPAPFQLVE…GSVTAQGVKV (61 aa)). Residues 812 to 813 (LL) carry the Basolateral membrane sorting motif. The segment at 856 to 898 (SFRDSATSSSDTETTEVHALWGPRSRHGLPREGSPSDSDDKCQ) is disordered.

The protein belongs to the chloride channel (TC 2.A.49) family. ClC-2/CLCN2 subfamily. In terms of assembly, homodimer. Interacts with auxiliary subunit HEPACAM. In terms of processing, phosphorylated. Activated by dephosphorylation. As to expression, ubiquitously expressed.

It is found in the cell membrane. It localises to the basolateral cell membrane. The protein localises to the cell projection. The protein resides in the dendritic spine membrane. Its subcellular location is the axon. The catalysed reaction is chloride(in) = chloride(out). It catalyses the reaction thiocyanate(in) = thiocyanate(out). The enzyme catalyses bromide(in) = bromide(out). It carries out the reaction nitrate(in) = nitrate(out). The catalysed reaction is iodide(out) = iodide(in). With respect to regulation, common gate kinetics are down-regulated by intracellular ATP. Inhibited by AK-42, a derivative of meclofenamate. Inhibited by Cd(2+). Inhibited by Zn(2+) and PKC activation. Inhibited at acidic pH. CCLN2:HEPACAM channel conductance is up-regulated upon hypo-osmolarity. Functionally, voltage-gated and osmosensitive chloride channel. Forms a homodimeric channel where each subunit has its own ion conduction pathway. Conducts double-barreled currents controlled by two types of gates, two fast glutamate gates that control each subunit independently and a slow common gate that opens and shuts off both subunits simultaneously. Displays inward rectification currents activated upon membrane hyperpolarization and extracellular hypotonicity. Contributes to chloride conductance involved in neuron excitability. In hippocampal neurons, generates a significant part of resting membrane conductance and provides an additional chloride efflux pathway to prevent chloride accumulation in dendrites upon GABA receptor activation. In glia, associates with the auxiliary subunit HEPACAM/GlialCAM at astrocytic processes and myelinated fiber tracts where it may regulate transcellular chloride flux buffering extracellular chloride and potassium concentrations. Regulates aldosterone production in adrenal glands. The opening of CLCN2 channels at hyperpolarized membrane potentials in the glomerulosa causes cell membrane depolarization, activation of voltage-gated calcium channels and increased expression of aldosterone synthase, the rate-limiting enzyme for aldosterone biosynthesis. Contributes to chloride conductance in retinal pigment epithelium involved in phagocytosis of shed photoreceptor outer segments and photoreceptor renewal. Conducts chloride currents at the basolateral membrane of epithelial cells with a role in chloride reabsorption rather than secretion. Permeable to small monovalent anions with chloride &gt; thiocyanate &gt; bromide &gt; nitrate &gt; iodide ion selectivity. The polypeptide is Chloride channel protein 2 (CLCN2) (Oryctolagus cuniculus (Rabbit)).